Here is a 120-residue protein sequence, read N- to C-terminus: Galanin-like peptide (120 aa).

Residues 1–22 form the signal peptide; the sequence is MALTVPLIVLAVLLSLMESPAS. A propeptide spanning residues 85-120 is cleaved from the precursor; it reads SLGETFAKPDSGVTFVGVPDVVPWKRIRPGTTRFQI.

This sequence belongs to the galanin family.

The protein resides in the secreted. In terms of biological role, hypothalamic neuropeptide which binds to the G-protein-coupled galanin receptors (GALR1, GALR2 and GALR3). Involved in a large number of putative physiological functions in CNS homeostatic processes, including the regulation of gonadotropin-releasing hormone secretion. The protein is Galanin-like peptide (GALP) of Sus scrofa (Pig).